The following is a 446-amino-acid chain: Maltoporin (446 aa).

An N-terminal signal peptide occupies residues Met1–Ala25.

Belongs to the porin LamB (TC 1.B.3) family. As to quaternary structure, homotrimer formed of three 18-stranded antiparallel beta-barrels, containing three independent channels.

It localises to the cell outer membrane. The enzyme catalyses beta-maltose(in) = beta-maltose(out). Involved in the transport of maltose and maltodextrins. This is Maltoporin from Escherichia fergusonii (strain ATCC 35469 / DSM 13698 / CCUG 18766 / IAM 14443 / JCM 21226 / LMG 7866 / NBRC 102419 / NCTC 12128 / CDC 0568-73).